We begin with the raw amino-acid sequence, 184 residues long: Photosystem I assembly protein Ycf4 (184 aa).

2 helical membrane passes run 21–43 (NFCW…ISSY) and 68–90 (FYGI…NVGS).

This sequence belongs to the Ycf4 family.

The protein localises to the plastid. It localises to the chloroplast thylakoid membrane. Its function is as follows. Seems to be required for the assembly of the photosystem I complex. In Physcomitrium patens (Spreading-leaved earth moss), this protein is Photosystem I assembly protein Ycf4.